Consider the following 107-residue polypeptide: MMYKQISHLEAWELVKKRDIVIADVRDQDSYEEEHIANALHLSMAKLQEYSEKADKEKPVLVYCYHGISSQSVAQHLVEQGFKEVYSLIGGFETWKAHHPTSDANKN.

One can recognise a Rhodanese domain in the interval 16-104 (KKRDIVIADV…WKAHHPTSDA (89 aa)). The Cysteine persulfide intermediate role is filled by Cys64.

This sequence belongs to the GlpE family.

It is found in the cytoplasm. The enzyme catalyses thiosulfate + hydrogen cyanide = thiocyanate + sulfite + 2 H(+). It catalyses the reaction thiosulfate + [thioredoxin]-dithiol = [thioredoxin]-disulfide + hydrogen sulfide + sulfite + 2 H(+). Transferase that catalyzes the transfer of sulfur from thiosulfate to thiophilic acceptors such as cyanide or dithiols. May function in a CysM-independent thiosulfate assimilation pathway by catalyzing the conversion of thiosulfate to sulfite, which can then be used for L-cysteine biosynthesis. This Coxiella burnetii (strain CbuK_Q154) (Coxiella burnetii (strain Q154)) protein is Thiosulfate sulfurtransferase GlpE.